The sequence spans 527 residues: Catalase (527 aa).

Over residues 1-22 (MADSRDPASDQMKLWKEQRAAQ) the composition is skewed to basic and acidic residues. The interval 1–34 (MADSRDPASDQMKLWKEQRAAQKPDVLTTGGGNP) is disordered. Ala2 bears the N-acetylalanine mark. Phosphoserine is present on Ser9. At Lys13 the chain carries N6-succinyllysine. Residues His75 and Asn148 contribute to the active site. 4 residues coordinate NADP(+): His194, Ser201, Arg203, and Asn213. Lys221 carries the N6-succinyllysine modification. Lys233 is modified (N6-acetyllysine). 3 residues coordinate NADP(+): Lys237, Trp303, and His305. Position 358 (Tyr358) interacts with heme. Phosphoserine is present on residues Ser422 and Ser434. N6-acetyllysine; alternate occurs at positions 449 and 480. Lys449 and Lys480 each carry N6-succinyllysine; alternate. Lys499 is subject to N6-acetyllysine. Thr511 carries the post-translational modification Phosphothreonine. Ser517 is modified (phosphoserine). The short motif at 524–527 (KANL) is the Microbody targeting signal; atypical element.

The protein belongs to the catalase family. Homotetramer. Interacts (via microbody targeting signal) with PEX5, monomeric form interacts with PEX5, leading to its translocation into peroxisomes. Heme is required as a cofactor. It depends on NADP(+) as a cofactor.

It localises to the peroxisome matrix. It catalyses the reaction 2 H2O2 = O2 + 2 H2O. Its function is as follows. Catalyzes the degradation of hydrogen peroxide (H(2)O(2)) generated by peroxisomal oxidases to water and oxygen, thereby protecting cells from the toxic effects of hydrogen peroxide. Promotes growth of cells including T-cells, B-cells, myeloid leukemia cells, melanoma cells, mastocytoma cells and normal and transformed fibroblast cells. This Canis lupus familiaris (Dog) protein is Catalase (CAT).